Reading from the N-terminus, the 277-residue chain is Peptide deformylase 1A, chloroplastic (277 aa).

Zn(2+) contacts are provided by cysteine 196 and histidine 238. Glutamate 239 is an active-site residue. Residue histidine 242 coordinates Zn(2+).

It belongs to the polypeptide deformylase family. Zn(2+) serves as cofactor.

The protein localises to the plastid. The protein resides in the chloroplast stroma. It carries out the reaction N-terminal N-formyl-L-methionyl-[peptide] + H2O = N-terminal L-methionyl-[peptide] + formate. Functionally, removes the formyl group from the N-terminal Met of newly synthesized proteins. The polypeptide is Peptide deformylase 1A, chloroplastic (PDF1A) (Solanum lycopersicum (Tomato)).